We begin with the raw amino-acid sequence, 326 residues long: Peroxidase 46 (326 aa).

The N-terminal stretch at 1-27 (MASSYRINCSTLLHLLMFLSSLLTSSA) is a signal peptide. A glycan (N-linked (GlcNAc...) asparagine) is linked at asparagine 28. Cystine bridges form between cysteine 38/cysteine 114, cysteine 71/cysteine 76, cysteine 120/cysteine 322, and cysteine 199/cysteine 233. Histidine 69 acts as the Proton acceptor in catalysis. Residues aspartate 70, valine 73, glycine 75, aspartate 77, and serine 79 each coordinate Ca(2+). N-linked (GlcNAc...) asparagine glycosylation is present at asparagine 85. Histidine 192 contributes to the heme b binding site. Threonine 193 is a Ca(2+) binding site. Residues aspartate 246, threonine 249, and aspartate 254 each contribute to the Ca(2+) site. Asparagine 278 carries N-linked (GlcNAc...) asparagine glycosylation.

It belongs to the peroxidase family. Classical plant (class III) peroxidase subfamily. It depends on heme b as a cofactor. Ca(2+) is required as a cofactor.

It is found in the secreted. The enzyme catalyses 2 a phenolic donor + H2O2 = 2 a phenolic radical donor + 2 H2O. In terms of biological role, removal of H(2)O(2), oxidation of toxic reductants, biosynthesis and degradation of lignin, suberization, auxin catabolism, response to environmental stresses such as wounding, pathogen attack and oxidative stress. These functions might be dependent on each isozyme/isoform in each plant tissue. This is Peroxidase 46 (PER46) from Arabidopsis thaliana (Mouse-ear cress).